A 367-amino-acid chain; its full sequence is GTP cyclohydrolase FolE2 (367 aa).

The protein belongs to the GTP cyclohydrolase IV family.

It catalyses the reaction GTP + H2O = 7,8-dihydroneopterin 3'-triphosphate + formate + H(+). Its pathway is cofactor biosynthesis; 7,8-dihydroneopterin triphosphate biosynthesis; 7,8-dihydroneopterin triphosphate from GTP: step 1/1. Its function is as follows. Converts GTP to 7,8-dihydroneopterin triphosphate. This is GTP cyclohydrolase FolE2 from Dinoroseobacter shibae (strain DSM 16493 / NCIMB 14021 / DFL 12).